The sequence spans 322 residues: Tetraacyldisaccharide 4'-kinase (322 aa).

54–61 (SVGGTGKT) lines the ATP pocket.

Belongs to the LpxK family.

The enzyme catalyses a lipid A disaccharide + ATP = a lipid IVA + ADP + H(+). The protein operates within glycolipid biosynthesis; lipid IV(A) biosynthesis; lipid IV(A) from (3R)-3-hydroxytetradecanoyl-[acyl-carrier-protein] and UDP-N-acetyl-alpha-D-glucosamine: step 6/6. Its function is as follows. Transfers the gamma-phosphate of ATP to the 4'-position of a tetraacyldisaccharide 1-phosphate intermediate (termed DS-1-P) to form tetraacyldisaccharide 1,4'-bis-phosphate (lipid IVA). This chain is Tetraacyldisaccharide 4'-kinase, found in Francisella tularensis subsp. holarctica (strain FTNF002-00 / FTA).